We begin with the raw amino-acid sequence, 226 residues long: MLLKIPNVLSKEQVETAKSKLLDADWADGNITAGYQSAKAKNNLQLPENSPIAIELGDIVLTALAQNNMFMSAALPLKIFPPLFNCYQGGRSFGVHVDNAIRQVPGTPVKVRTDISMTLFLSEPDEYEGGELVIEDTYGSQSVKLAAGDMVLYPATSLHSVTPVTKGRRLASFFWLQSMVNSDEKRTLLFDMDMAIQSLRAQVDDSPEIVQLTGVYHNLLRQWAQT.

The Fe2OG dioxygenase domain occupies 78 to 178 (KIFPPLFNCY…RLASFFWLQS (101 aa)). Fe cation contacts are provided by H96, D98, and H159. 2-oxoglutarate is bound at residue R169.

Fe(2+) is required as a cofactor. It depends on L-ascorbate as a cofactor.

The protein is PKHD-type hydroxylase Sde_2812 of Saccharophagus degradans (strain 2-40 / ATCC 43961 / DSM 17024).